Here is a 37-residue protein sequence, read N- to C-terminus: GIFSLVKGAAKLAGKGLAKEGGKFGLELIACKIAKQC.

Cys-31 and Cys-37 are joined by a disulfide.

It belongs to the frog skin active peptide (FSAP) family. Esculentin subfamily. As to expression, expressed by the skin glands.

The protein localises to the secreted. Its function is as follows. Shows antibacterial activity against representative Gram-negative and Gram-positive bacterial species, and hemolytic activity. In Pelophylax lessonae (Pool frog), this protein is Esculentin-2B.